The primary structure comprises 147 residues: Small ribosomal subunit protein uS12 (147 aa).

Belongs to the universal ribosomal protein uS12 family. Part of the 30S ribosomal subunit.

Its function is as follows. With S4 and S5 plays an important role in translational accuracy. Located at the interface of the 30S and 50S subunits. The protein is Small ribosomal subunit protein uS12 of Thermococcus kodakarensis (strain ATCC BAA-918 / JCM 12380 / KOD1) (Pyrococcus kodakaraensis (strain KOD1)).